A 401-amino-acid polypeptide reads, in one-letter code: Dynactin subunit 2 (401 aa).

Residues 1–25 (MADPKYADLPGIARNEPDVYETSDL) form a disordered region. Ala-2 bears the N-acetylalanine mark. Position 6 is a phosphotyrosine (Tyr-6). Ser-83 is modified (phosphoserine). Tyr-86 is modified (phosphotyrosine). The stretch at 99-132 (PQQKYQRLLHEVQELTTEVEKIKTTVKESATEEK) forms a coiled coil. Phosphothreonine occurs at positions 134 and 198. Residues 214–244 (EQDKFSQAAKVAELEKRLTELETAVRCDQDA) adopt a coiled-coil conformation. The residue at position 320 (Ser-320) is a Phosphoserine. Residues 379 to 399 (RENLATVEGNFASIDERMKKL) adopt a coiled-coil conformation.

Belongs to the dynactin subunit 2 family. As to quaternary structure, subunit of dynactin, a multiprotein complex part of a tripartite complex with dynein and a adapter, such as BICDL1, BICD2 or HOOK3. The dynactin complex is built around ACTR1A/ACTB filament and consists of an actin-related filament composed of a shoulder domain, a pointed end and a barbed end. Its length is defined by its flexible shoulder domain. The soulder is composed of 2 DCTN1 subunits, 4 DCTN2 and 2 DCTN3. The 4 DCNT2 (via N-terminus) bind the ACTR1A filament and act as molecular rulers to determine the length. The pointed end is important for binding dynein-dynactin cargo adapters and consists of 4 subunits: ACTR10, DCNT4, DCTN5 and DCTN6. The barbed end is composed of a CAPZA1:CAPZB heterodimers, which binds ACTR1A/ACTB filament and dynactin and stabilizes dynactin. Interacts with BICD2 and CEP135. Interacts with DYNAP. Interacts with ECPAS. Interacts with MAPRE1.

It is found in the cytoplasm. The protein resides in the cytoskeleton. The protein localises to the microtubule organizing center. It localises to the centrosome. Its subcellular location is the membrane. Functionally, part of the dynactin complex that activates the molecular motor dynein for ultra-processive transport along microtubules. In the dynactin soulder domain, binds the ACTR1A filament and acts as a molecular ruler to determine the length. Modulates cytoplasmic dynein binding to an organelle, and plays a role in prometaphase chromosome alignment and spindle organization during mitosis. Involved in anchoring microtubules to centrosomes. May play a role in synapse formation during brain development. The protein is Dynactin subunit 2 of Homo sapiens (Human).